Consider the following 158-residue polypeptide: Cytochrome c-type biogenesis protein CcmE (158 aa).

Residues 1–11 (MTRPDSGSSPA) are compositionally biased toward polar residues. The segment at 1-20 (MTRPDSGSSPAPLSEARRRK) is disordered. Topologically, residues 1-23 (MTRPDSGSSPAPLSEARRRKRNP) are cytoplasmic. The chain crosses the membrane as a helical; Signal-anchor for type II membrane protein span at residues 24–44 (LPTVLGITALLGLAGFIAFGN). The Extracellular portion of the chain corresponds to 45–158 (LNKSLEYFVT…ELRDLLEQSE (114 aa)). Positions 137 and 141 each coordinate heme.

The protein belongs to the CcmE/CycJ family.

The protein localises to the cell membrane. Its function is as follows. Heme chaperone required for the biogenesis of c-type cytochromes. Transiently binds heme delivered by CcmC and transfers the heme to apo-cytochromes in a process facilitated by CcmF and CcmH. This is Cytochrome c-type biogenesis protein CcmE from Deinococcus deserti (strain DSM 17065 / CIP 109153 / LMG 22923 / VCD115).